An 868-amino-acid chain; its full sequence is Rifampicin phosphotransferase (868 aa).

An ATP-binding region spans residues 1–313 (MSSFVLDFQE…IYIVQSRPIT (313 aa)). ATP-binding residues include Lys-22, Arg-116, Gly-131, Thr-135, Gln-182, Glu-296, Gln-308, and Arg-310. The segment at 326–756 (NHVYISVGHQ…TSDGEIITGK (431 aa)) is rifampicin-binding. Residues 769–867 (GLPVSSGVVE…VHGTEGYIEV (99 aa)) form a swivel phosphohistidine region. The active-site Tele-phosphohistidine intermediate is His-827.

This sequence belongs to the rifampicin phosphotransferase family.

The enzyme catalyses rifampicin + ATP + H2O = 21-phosphorifampicin + AMP + phosphate + 2 H(+). Catalyzes the phosphorylation of rifampicin, also known as rifampin (RIF), leading to its inactivation. Confers high level resistance to a variety of clinically used rifamycin antibiotics. Does not show phosphoenolpyruvate (PEP) synthase activity. The chain is Rifampicin phosphotransferase from Bacillus cereus (strain ATCC 14579 / DSM 31 / CCUG 7414 / JCM 2152 / NBRC 15305 / NCIMB 9373 / NCTC 2599 / NRRL B-3711).